Here is a 323-residue protein sequence, read N- to C-terminus: Aspartate carbamoyltransferase catalytic subunit (323 aa).

Carbamoyl phosphate is bound by residues arginine 71 and threonine 72. Lysine 99 contributes to the L-aspartate binding site. 3 residues coordinate carbamoyl phosphate: arginine 121, histidine 151, and glutamine 154. 2 residues coordinate L-aspartate: arginine 184 and arginine 239. Carbamoyl phosphate-binding residues include glycine 280 and proline 281.

It belongs to the aspartate/ornithine carbamoyltransferase superfamily. ATCase family. Heterododecamer (2C3:3R2) of six catalytic PyrB chains organized as two trimers (C3), and six regulatory PyrI chains organized as three dimers (R2).

It carries out the reaction carbamoyl phosphate + L-aspartate = N-carbamoyl-L-aspartate + phosphate + H(+). It participates in pyrimidine metabolism; UMP biosynthesis via de novo pathway; (S)-dihydroorotate from bicarbonate: step 2/3. Its function is as follows. Catalyzes the condensation of carbamoyl phosphate and aspartate to form carbamoyl aspartate and inorganic phosphate, the committed step in the de novo pyrimidine nucleotide biosynthesis pathway. This chain is Aspartate carbamoyltransferase catalytic subunit, found in Ralstonia pickettii (strain 12J).